A 121-amino-acid polypeptide reads, in one-letter code: Large ribosomal subunit protein bL21c (121 aa).

It belongs to the bacterial ribosomal protein bL21 family. As to quaternary structure, part of the 50S ribosomal subunit.

It is found in the plastid. The protein resides in the chloroplast. Functionally, this protein binds to 23S rRNA. In Chaetosphaeridium globosum (Charophycean green alga), this protein is Large ribosomal subunit protein bL21c.